The following is an 86-amino-acid chain: Weak neurotoxin WNTX34 (86 aa).

A signal peptide spans 1–21; sequence MKTLLLTLVVVTIVCLDLGYS. Intrachain disulfides connect cysteine 24-cysteine 45, cysteine 27-cysteine 32, cysteine 38-cysteine 63, cysteine 67-cysteine 78, and cysteine 79-cysteine 84.

This sequence belongs to the three-finger toxin family. Ancestral subfamily. Orphan group II sub-subfamily. As to expression, expressed by the venom gland.

The protein resides in the secreted. Binds with low affinity to muscular (alpha-1-beta-1-delta-epsilon/CHRNA1-CHRNB1-CHRND-CHRNE) and very low affinity to neuronal (alpha-7/CHRNA7) nicotinic acetylcholine receptor (nAChR). This is Weak neurotoxin WNTX34 from Ophiophagus hannah (King cobra).